The primary structure comprises 330 residues: MHFIDEVKIYIKGGNGGNGCVSFHREKFIDRGGPDGGDGGRGGSVIFRSNHHLNTLVNYRYKQHFTAENGENGKDSNRSGKSGKSLVLDVPIGTQIFSEDGNILFYDFTVDDQSFEIIKGGSGGLGNSHFKSSVNQAPRKRTEGEIAEEMWIHLSLKLLSDVGLVGLPNAGKSTFLSVVTAAKPKIADYPFTTLVPNLGVVYVDDEEFVIADIPGLIEGAHQGHGLGDKFLKHIERCNVLIHLIDGSSNDVVADYNTVRLELESYSDYLKNKIETICLNKCDVLTDEEIQEKINKLQKVTNKEVFPISTCTNAGVNKIVKLALETIKNQE.

In terms of domain architecture, Obg spans 1 to 159 (MHFIDEVKIY…MWIHLSLKLL (159 aa)). The 168-residue stretch at 160 to 327 (SDVGLVGLPN…IVKLALETIK (168 aa)) folds into the OBG-type G domain. GTP is bound by residues 166-173 (GLPNAGKS), 191-195 (FTTLV), 212-215 (DIPG), 279-282 (NKCD), and 308-310 (STC). The Mg(2+) site is built by serine 173 and threonine 193.

The protein belongs to the TRAFAC class OBG-HflX-like GTPase superfamily. OBG GTPase family. Monomer. It depends on Mg(2+) as a cofactor.

Its subcellular location is the cytoplasm. An essential GTPase which binds GTP, GDP and possibly (p)ppGpp with moderate affinity, with high nucleotide exchange rates and a fairly low GTP hydrolysis rate. Plays a role in control of the cell cycle, stress response, ribosome biogenesis and in those bacteria that undergo differentiation, in morphogenesis control. This Rickettsia rickettsii (strain Iowa) protein is GTPase Obg.